Consider the following 234-residue polypeptide: R-spondin-4 (234 aa).

The N-terminal stretch at 1–19 (MRAPLCLLLLVAHAVDMLA) is a signal peptide. A glycan (N-linked (GlcNAc...) asparagine) is linked at asparagine 34. 11 cysteine pairs are disulfide-bonded: cysteine 35–cysteine 41, cysteine 38–cysteine 47, cysteine 50–cysteine 69, cysteine 73–cysteine 88, cysteine 91–cysteine 98, cysteine 95–cysteine 104, cysteine 107–cysteine 118, cysteine 122–cysteine 135, cysteine 139–cysteine 181, cysteine 150–cysteine 157, and cysteine 190–cysteine 196. The FU repeat unit spans residues 85-128 (VNRCKKCGATCESCFSQDFCIRCKRQFYLYKGKCLPTCPPGTLA). Residues 138–197 (ECELGPWGGWSPCTHNGKTCGSAWGLESRVREAGRAGHEEAATCQVLSESRKCPIQRPCP) enclose the TSP type-1 domain. Residues 190-234 (CPIQRPCPGERSPGQKKGRKDRRPRKDRKLDRRLDVRPRQPGLQP) form a disordered region. A compositionally biased stretch (basic residues) spans 203-216 (GQKKGRKDRRPRKD). Positions 217–227 (RKLDRRLDVRP) are enriched in basic and acidic residues.

Belongs to the R-spondin family. In terms of assembly, binds heparin. Interacts with LGR4, LGR5 and LGR6. In terms of processing, tyr-112 may be phosphorylated; however as this position is probably extracellular, the vivo relevance is not proven.

It localises to the secreted. Activator of the canonical Wnt signaling pathway by acting as a ligand for LGR4-6 receptors. Upon binding to LGR4-6 (LGR4, LGR5 or LGR6), LGR4-6 associate with phosphorylated LRP6 and frizzled receptors that are activated by extracellular Wnt receptors, triggering the canonical Wnt signaling pathway to increase expression of target genes. Also regulates the canonical Wnt/beta-catenin-dependent pathway and non-canonical Wnt signaling by acting as an inhibitor of ZNRF3, an important regulator of the Wnt signaling pathway. The polypeptide is R-spondin-4 (RSPO4) (Homo sapiens (Human)).